Here is a 62-residue protein sequence, read N- to C-terminus: DNA gyrase inhibitor YacG (62 aa).

The Zn(2+) site is built by Cys-9, Cys-12, Cys-27, and Cys-31. The span at Gly-43 to Pro-52 shows a compositional bias: basic and acidic residues. The segment at Gly-43–Glu-62 is disordered.

The protein belongs to the DNA gyrase inhibitor YacG family. As to quaternary structure, interacts with GyrB. Zn(2+) serves as cofactor.

Functionally, inhibits all the catalytic activities of DNA gyrase by preventing its interaction with DNA. Acts by binding directly to the C-terminal domain of GyrB, which probably disrupts DNA binding by the gyrase. The sequence is that of DNA gyrase inhibitor YacG from Geobacter sp. (strain M21).